A 259-amino-acid polypeptide reads, in one-letter code: Protein BEAN1 (259 aa).

A helical transmembrane segment spans residues 36 to 56 (VLVASAVIGVVIILSCITIIV). The span at 71 to 89 (RHRHHRHHHHHHHHRRRRH) shows a compositional bias: basic residues. 2 disordered regions span residues 71–91 (RHRHHRHHHHHHHHRRRRHRE) and 152–259 (VGPG…ERIV). Polar residues predominate over residues 171–187 (LTDSCPTLDGTSDSGSG). Low complexity predominate over residues 221 to 230 (GAGPPSGLLP).

In terms of assembly, interacts with NEDD4.

It is found in the membrane. This is Protein BEAN1 (BEAN1) from Homo sapiens (Human).